The primary structure comprises 244 residues: Probable transcriptional regulatory protein BT0025 (244 aa).

The protein belongs to the TACO1 family.

The protein resides in the cytoplasm. The sequence is that of Probable transcriptional regulatory protein BT0025 from Borrelia turicatae (strain 91E135).